The chain runs to 356 residues: S-adenosylmethionine:tRNA ribosyltransferase-isomerase (356 aa).

The protein belongs to the QueA family. As to quaternary structure, monomer.

The protein resides in the cytoplasm. It catalyses the reaction 7-aminomethyl-7-carbaguanosine(34) in tRNA + S-adenosyl-L-methionine = epoxyqueuosine(34) in tRNA + adenine + L-methionine + 2 H(+). It functions in the pathway tRNA modification; tRNA-queuosine biosynthesis. Its function is as follows. Transfers and isomerizes the ribose moiety from AdoMet to the 7-aminomethyl group of 7-deazaguanine (preQ1-tRNA) to give epoxyqueuosine (oQ-tRNA). In Shigella boydii serotype 4 (strain Sb227), this protein is S-adenosylmethionine:tRNA ribosyltransferase-isomerase.